The sequence spans 308 residues: MSEITAAMVKELREKTGAGMMDCKKALAETSGDMEAAIDWLRAKGIAKADKKSGRTAAEGLVGVSSEGTKAVVVEVNSETDFVARNDAFQDLVRGIAKVAVSTNGTVEAVAAATYPASGKSVSDTIKDAIATIGENMNLRRSIALSVEDGVVATYIHNAVSDGLGKLGVLVALKSTGDKEALNAIGRQVAMHIAATAPLAIRPEEVDAAVAERERNVFIEQSRASGKPDNIIEKMVEGRMRKFFEEVALLSQSFVINPDLTVAAAIKEAEKAVGAPIEVAGMARLLLGEGVEKEETDFAAEVAAAVKG.

Positions 80 to 83 (TDFV) are involved in Mg(2+) ion dislocation from EF-Tu.

The protein belongs to the EF-Ts family.

Its subcellular location is the cytoplasm. In terms of biological role, associates with the EF-Tu.GDP complex and induces the exchange of GDP to GTP. It remains bound to the aminoacyl-tRNA.EF-Tu.GTP complex up to the GTP hydrolysis stage on the ribosome. The chain is Elongation factor Ts from Rhizobium etli (strain ATCC 51251 / DSM 11541 / JCM 21823 / NBRC 15573 / CFN 42).